The following is an 81-amino-acid chain: Acyl carrier protein (81 aa).

Residues 2–80 form the Carrier domain; the sequence is ASKEEILAGL…DAVDFIDGAQ (79 aa). An O-(pantetheine 4'-phosphoryl)serine modification is found at S40.

This sequence belongs to the acyl carrier protein (ACP) family. In terms of processing, 4'-phosphopantetheine is transferred from CoA to a specific serine of apo-ACP by AcpS. This modification is essential for activity because fatty acids are bound in thioester linkage to the sulfhydryl of the prosthetic group.

It is found in the cytoplasm. Its pathway is lipid metabolism; fatty acid biosynthesis. In terms of biological role, carrier of the growing fatty acid chain in fatty acid biosynthesis. The protein is Acyl carrier protein of Micrococcus luteus (strain ATCC 4698 / DSM 20030 / JCM 1464 / CCM 169 / CCUG 5858 / IAM 1056 / NBRC 3333 / NCIMB 9278 / NCTC 2665 / VKM Ac-2230) (Micrococcus lysodeikticus).